The sequence spans 55 residues: Rubredoxin-1 (55 aa).

The 54-residue stretch at 1-54 (MKKWQCVVCGLIYDEAKGWPEEGIEAGTRWEDVPEDWLCPDCGVGKLDFEMIEI) folds into the Rubredoxin-like domain. Fe cation-binding residues include cysteine 6, cysteine 9, cysteine 39, and cysteine 42.

This sequence belongs to the rubredoxin family. The cofactor is Fe(3+).

It is found in the cytoplasm. It functions in the pathway hydrocarbon metabolism; alkane degradation. Involved in the hydrocarbon hydroxylating system, which transfers electrons from NADH to rubredoxin reductase and then through rubredoxin to alkane 1 monooxygenase. This chain is Rubredoxin-1 (rubA1), found in Pseudomonas aeruginosa (strain ATCC 15692 / DSM 22644 / CIP 104116 / JCM 14847 / LMG 12228 / 1C / PRS 101 / PAO1).